A 667-amino-acid polypeptide reads, in one-letter code: WD repeat-containing protein 48 homolog (667 aa).

8 WD repeats span residues 26–65, 71–110, 113–152, 164–203, 206–245, 248–287, 290–329, and 350–389; these read QHRN…NEKY, HHND…CMST, THRD…ALTA, GSKD…RSMK, GHTE…CVQT, VHKE…NKML, EEQA…RCTL, and KGGA…KKEQ. Positions 591 to 615 are disordered; it reads ETTPSGGNANNSLQNSQSDANSEGS.

This sequence belongs to the WD repeat WDR48 family. Catalytic component of the Usp12-46 deubiquitylase complex consisting of Usp12-46, Wdr20 and Uaf1; regulatory subunit that, together wtih Wdr20, stabilizes Usp12-46. The Usp12-46 deubiquitylase complex associates with arr/arrow; the interaction leads to deubiquitination and stabilization of arr/arrow.

Its function is as follows. Regulatory component of the Usp12-46 deubiquitylase complex. activates deubiquitination by increasing the catalytic turnover without increasing the affinity of deubiquitinating enzymes for the substrate. The complex deubiquitylates the wg/wingless-signaling receptor arr/arrow, which stabilizes the receptor and increases its concentration at the cell surface; this enhances the sensitivity of cells to wg/wingless-signal stimulation. This increases the amplitude and spatial range of the signaling response to the wg/wingless morphogen gradient, facilitating the precise concentration-dependent regulation of its target genes. Together with Wdr20 and Usp12-46 required for wg/wingless-mediated signaling in the wing imaginal disc and for wg/wingless-dependent regulation of intestinal stem cell proliferation. In Drosophila ananassae (Fruit fly), this protein is WD repeat-containing protein 48 homolog.